A 62-amino-acid chain; its full sequence is UPF0434 protein RHE_CH03977 (62 aa).

This sequence belongs to the UPF0434 family.

The polypeptide is UPF0434 protein RHE_CH03977 (Rhizobium etli (strain ATCC 51251 / DSM 11541 / JCM 21823 / NBRC 15573 / CFN 42)).